Here is a 361-residue protein sequence, read N- to C-terminus: 3-dehydroquinate synthase (361 aa).

NAD(+) contacts are provided by residues glycine 104 to aspartate 108, threonine 128 to threonine 129, lysine 140, and lysine 149. Zn(2+)-binding residues include glutamate 182, histidine 245, and histidine 262.

This sequence belongs to the sugar phosphate cyclases superfamily. Dehydroquinate synthase family. The cofactor is NAD(+). Requires Co(2+) as cofactor. Zn(2+) serves as cofactor.

Its subcellular location is the cytoplasm. It carries out the reaction 7-phospho-2-dehydro-3-deoxy-D-arabino-heptonate = 3-dehydroquinate + phosphate. It participates in metabolic intermediate biosynthesis; chorismate biosynthesis; chorismate from D-erythrose 4-phosphate and phosphoenolpyruvate: step 2/7. Catalyzes the conversion of 3-deoxy-D-arabino-heptulosonate 7-phosphate (DAHP) to dehydroquinate (DHQ). The polypeptide is 3-dehydroquinate synthase (Halalkalibacterium halodurans (strain ATCC BAA-125 / DSM 18197 / FERM 7344 / JCM 9153 / C-125) (Bacillus halodurans)).